The sequence spans 337 residues: Anthranilate phosphoribosyltransferase (337 aa).

5-phospho-alpha-D-ribose 1-diphosphate-binding positions include glycine 81, 84 to 85 (GD), serine 89, 91 to 94 (NVST), 109 to 117 (KHGNRAATS), and alanine 121. Glycine 81 provides a ligand contact to anthranilate. Serine 93 contacts Mg(2+). Asparagine 112 provides a ligand contact to anthranilate. Position 167 (arginine 167) interacts with anthranilate. Aspartate 226 and glutamate 227 together coordinate Mg(2+).

This sequence belongs to the anthranilate phosphoribosyltransferase family. As to quaternary structure, homodimer. The cofactor is Mg(2+).

It catalyses the reaction N-(5-phospho-beta-D-ribosyl)anthranilate + diphosphate = 5-phospho-alpha-D-ribose 1-diphosphate + anthranilate. It functions in the pathway amino-acid biosynthesis; L-tryptophan biosynthesis; L-tryptophan from chorismate: step 2/5. Functionally, catalyzes the transfer of the phosphoribosyl group of 5-phosphorylribose-1-pyrophosphate (PRPP) to anthranilate to yield N-(5'-phosphoribosyl)-anthranilate (PRA). The protein is Anthranilate phosphoribosyltransferase of Methylorubrum populi (strain ATCC BAA-705 / NCIMB 13946 / BJ001) (Methylobacterium populi).